Here is a 1553-residue protein sequence, read N- to C-terminus: Mediator of RNA polymerase II transcription subunit 14 (1553 aa).

Short sequence motifs (LXXLL motif) lie at residues 55–59 (LAELL) and 472–476 (LPALL). Serine 615 bears the Phosphoserine mark. 3 disordered regions span residues 699–723 (FATQQQQQQGAPAVAGENKPSGTSG), 1006–1199 (ASHE…LNRP), and 1513–1553 (GVGS…GGPQ). A Phosphoserine modification is found at serine 1015. Composition is skewed to low complexity over residues 1024–1039 (GGPSSVAGVSAGGSSP) and 1065–1080 (PSSSNPHTPASPHPSA). Over residues 1081–1090 (GAGGGSGPQG) the composition is skewed to gly residues. A compositionally biased stretch (pro residues) spans 1099 to 1108 (PPAPHMPHPS). A compositionally biased stretch (polar residues) spans 1131 to 1155 (GPNTLYMQSHQDSPFTAMSPANNNW). Pro residues predominate over residues 1159–1169 (PSMPRPSPRPG). Residues 1177 to 1193 (TGGGAGVAGGTDRGGSR) show a composition bias toward gly residues. Over residues 1515-1534 (GSSPNPMMPMQQLPQQVGPQ) the composition is skewed to low complexity.

It belongs to the Mediator complex subunit 14 family. Component of the Mediator complex, which may include CDK8, MED4, MED6, MED11, MED14, MED17, MED18, MED20, MED21, MED22, MED27, MED28, MED30 and MED31.

It localises to the nucleus. Component of the Mediator complex, a coactivator involved in the regulated transcription of nearly all RNA polymerase II-dependent genes. Mediator functions as a bridge to convey information from gene-specific regulatory proteins to the basal RNA polymerase II transcription machinery. Mediator is recruited to promoters by direct interactions with regulatory proteins and serves as a scaffold for the assembly of a functional pre-initiation complex with RNA polymerase II and the general transcription factors. Required for activated transcription of the MtnA, MtnB and MtnD genes. The chain is Mediator of RNA polymerase II transcription subunit 14 (MED14) from Drosophila melanogaster (Fruit fly).